A 150-amino-acid chain; its full sequence is Cytochrome c oxidase subunit 5A, mitochondrial (150 aa).

A mitochondrion-targeting transit peptide spans 1–41; that stretch reads MLGAALRRCAVAATTWAGPRGLLHSARTPGPAAAIQSVRCY. The short motif at 2-20 is the SIFI-degron element; it reads LGAALRRCAVAATTWAGPR. N6-acetyllysine is present on residues Lys87 and Lys113. Residue Thr141 is modified to Phosphothreonine.

The protein belongs to the cytochrome c oxidase subunit 5A family. As to quaternary structure, component of the cytochrome c oxidase (complex IV, CIV), a multisubunit enzyme composed of 14 subunits. The complex is composed of a catalytic core of 3 subunits MT-CO1, MT-CO2 and MT-CO3, encoded in the mitochondrial DNA, and 11 supernumerary subunits COX4I, COX5A, COX5B, COX6A, COX6B, COX6C, COX7A, COX7B, COX7C, COX8 and NDUFA4, which are encoded in the nuclear genome. The complex exists as a monomer or a dimer and forms supercomplexes (SCs) in the inner mitochondrial membrane with NADH-ubiquinone oxidoreductase (complex I, CI) and ubiquinol-cytochrome c oxidoreductase (cytochrome b-c1 complex, complex III, CIII), resulting in different assemblies (supercomplex SCI(1)III(2)IV(1) and megacomplex MCI(2)III(2)IV(2)). Interacts with AFG1L. Interacts with RAB5IF. In terms of processing, in response to mitochondrial stress, the precursor protein is ubiquitinated by the SIFI complex in the cytoplasm before mitochondrial import, leading to its degradation. Within the SIFI complex, UBR4 initiates ubiquitin chain that are further elongated or branched by KCMF1.

The protein resides in the mitochondrion inner membrane. It functions in the pathway energy metabolism; oxidative phosphorylation. Functionally, component of the cytochrome c oxidase, the last enzyme in the mitochondrial electron transport chain which drives oxidative phosphorylation. The respiratory chain contains 3 multisubunit complexes succinate dehydrogenase (complex II, CII), ubiquinol-cytochrome c oxidoreductase (cytochrome b-c1 complex, complex III, CIII) and cytochrome c oxidase (complex IV, CIV), that cooperate to transfer electrons derived from NADH and succinate to molecular oxygen, creating an electrochemical gradient over the inner membrane that drives transmembrane transport and the ATP synthase. Cytochrome c oxidase is the component of the respiratory chain that catalyzes the reduction of oxygen to water. Electrons originating from reduced cytochrome c in the intermembrane space (IMS) are transferred via the dinuclear copper A center (CU(A)) of subunit 2 and heme A of subunit 1 to the active site in subunit 1, a binuclear center (BNC) formed by heme A3 and copper B (CU(B)). The BNC reduces molecular oxygen to 2 water molecules using 4 electrons from cytochrome c in the IMS and 4 protons from the mitochondrial matrix. The polypeptide is Cytochrome c oxidase subunit 5A, mitochondrial (COX5A) (Macaca mulatta (Rhesus macaque)).